An 831-amino-acid polypeptide reads, in one-letter code: Cadherin-related family member 3 (831 aa).

Positions 1 to 19 (MQGAVIVLVLFGITSGGEA) are cleaved as a signal peptide. Residues 20–711 (LHLLHLPATS…VYSTSAWYVP (692 aa)) are Extracellular-facing. Cadherin domains are found at residues 24 to 132 (HLPA…PPQF), 136 to 236 (LAQG…TPRF), 237 to 344 (TSPR…NPAT), 346 to 466 (RKLT…RPSY), 462 to 570 (ERPS…TPNF), and 567 to 693 (TPNF…RPRI). N-linked (GlcNAc...) asparagine glycosylation is found at N47, N186, and N257. A helical membrane pass occupies residues 712 to 732 (FIVTLGSILLLGLLGSLMVLL). Residues 733 to 831 (SKAVYRHCSS…EAPVPKHTGR (99 aa)) are Cytoplasmic-facing. 2 disordered regions span residues 743–763 (TTRRDRKPLTKKRDTKRMNRE) and 798–831 (RWKGPLTQLPNWPEPSTQHRGTAGEAPVPKHTGR). The span at 749–763 (KPLTKKRDTKRMNRE) shows a compositional bias: basic and acidic residues. The span at 805–817 (QLPNWPEPSTQHR) shows a compositional bias: polar residues.

The protein localises to the cell membrane. Functionally, cadherins are calcium-dependent cell adhesion proteins. They preferentially interact with themselves in a homophilic manner in connecting cells; cadherins may thus contribute to the sorting of heterogeneous cell types. In Mus musculus (Mouse), this protein is Cadherin-related family member 3 (Cdhr3).